The following is a 579-amino-acid chain: Folliculin (579 aa).

Residues 30-81 are disordered; sequence PQGDGNEDSPGQGEQAEEEEGGIQMNSRMRAHSPAEGASVESSSPGPKKSDM. A phosphoserine mark is found at Ser-62 and Ser-73. Positions 86–242 constitute a uDENN FLCN/SMCR8-type domain; the sequence is RSLAAGHPGY…RNGNAARSLT (157 aa). Residues 210-220 are essential for interaction with LDHA; it reads AEQFGCPQRAQ. Residues 287–310 are a coiled coil; it reads EKLADLEEESESWDNSEAEEEEKA. Residues 294–308 show a composition bias toward acidic residues; that stretch reads EESESWDNSEAEEEE. Positions 294-337 are disordered; sequence EESESWDNSEAEEEEKAPVLPESTEGRELTQGPAESSSLSGCGS. Ser-302 is modified (phosphoserine). The span at 326 to 336 shows a compositional bias: polar residues; that stretch reads PAESSSLSGCG. The 153-residue stretch at 339–491 folds into the cDENN FLCN/SMCR8-type domain; that stretch reads QPRKLPVFKS…ILNKIEAALT (153 aa). Ser-406, Ser-537, and Ser-542 each carry phosphoserine; by ULK1. The region spanning 493–558 is the dDENN FLCN/SMCR8-type domain; the sequence is QNLSVDVVDQ…LLKFWMTGLS (66 aa). The residue at position 571 (Ser-571) is a Phosphoserine.

Belongs to the folliculin family. Interacts (via C-terminus) with FNIP1 or FNIP2 (via C-terminus). Component of the lysosomal folliculin complex (LFC), composed of FLCN, FNIP1 (or FNIP2), RagA/RRAGA or RagB/RRAGB GDP-bound, RagC/RRAGC or RagD/RRAGD GTP-bound, and Ragulator. Interaction with FNIP1 or FNIP2 mediates indirect interaction with the PRKAA1, PRKAB1 and PRKAG1 subunits of 5'-AMP-activated protein kinase (AMPK). Interacts with HSP90AA1 in the presence of FNIP1. Interacts with HSP70, STUB1, CDC37, AHSA1, CCT2, STIP1, PTGES3 and PPP5C. Interacts with GABARAP; interaction takes place in the presence of FNIP1 and/or FNIP2. Interacts with RILP; the interaction is direct and promotes association between RILP and RAB34. Interacts with KIF3A and KIF3B. Interacts with lactate dehydrogenase LDHA, but not LDHB; the interaction is direct, may preferentially bind LDHA dimers rather than tetramers, and regulates LDHA activity, acting as an uncompetitive inhibitor. In terms of processing, phosphorylation by ULK1 modulates the interaction with GABARAP and is required to regulate autophagy. As to expression, expressed in most tissues tested, including skin, lung, kidney, heart, testis and stomach.

Its subcellular location is the lysosome membrane. It is found in the cytoplasm. The protein resides in the cytosol. The protein localises to the cell projection. It localises to the cilium. Its subcellular location is the cytoskeleton. It is found in the microtubule organizing center. The protein resides in the centrosome. The protein localises to the spindle. It localises to the nucleus. GTPase-activating activity is inhibited in the folliculin complex (LFC), which stabilizes the GDP-bound state of RagA/RRAGA (or RagB/RRAGB), because Arg-164 is located far from the RagC/RRAGC or RagD/RRAGD nucleotide pocket. Disassembly of the LFC complex upon amino acid restimulation liberates the GTPase-activating activity. In terms of biological role, multi-functional protein, involved in both the cellular response to amino acid availability and in the regulation of glycolysis. GTPase-activating protein that plays a key role in the cellular response to amino acid availability through regulation of the non-canonical mTORC1 signaling cascade controlling the MiT/TFE factors TFEB and TFE3. Activates mTORC1 by acting as a GTPase-activating protein: specifically stimulates GTP hydrolysis by RagC/RRAGC or RagD/RRAGD, promoting the conversion to the GDP-bound state of RagC/RRAGC or RagD/RRAGD, and thereby activating the kinase activity of mTORC1. The GTPase-activating activity is inhibited during starvation and activated in presence of nutrients. Acts as a key component for non-canonical mTORC1-dependent control of the MiT/TFE factors TFEB and TFE3, while it is not involved in mTORC1-dependent phosphorylation of canonical RPS6KB1/S6K1 and EIF4EBP1/4E-BP1. In low-amino acid conditions, the lysosomal folliculin complex (LFC) is formed on the membrane of lysosomes, which inhibits the GTPase-activating activity of FLCN, inactivates mTORC1 and maximizes nuclear translocation of TFEB and TFE3. Upon amino acid restimulation, RagA/RRAGA (or RagB/RRAGB) nucleotide exchange promotes disassembly of the LFC complex and liberates the GTPase-activating activity of FLCN, leading to activation of mTORC1 and subsequent cytoplasmic retention of TFEB and TFE3. Indirectly acts as a positive regulator of Wnt signaling by promoting mTOR-dependent cytoplasmic retention of MiT/TFE factor TFE3. Required for the exit of hematopoietic stem cell from pluripotency by promoting mTOR-dependent cytoplasmic retention of TFE3, thereby increasing Wnt signaling. Acts as an inhibitor of browning of adipose tissue by regulating mTOR-dependent cytoplasmic retention of TFE3. Involved in the control of embryonic stem cells differentiation; together with LAMTOR1 it is necessary to recruit and activate RagC/RRAGC and RagD/RRAGD at the lysosomes, and to induce exit of embryonic stem cells from pluripotency via non-canonical, mTOR-independent TFE3 inactivation. In response to flow stress, regulates STK11/LKB1 accumulation and mTORC1 activation through primary cilia: may act by recruiting STK11/LKB1 to primary cilia for activation of AMPK resided at basal bodies, causing mTORC1 down-regulation. Together with FNIP1 and/or FNIP2, regulates autophagy: following phosphorylation by ULK1, interacts with GABARAP and promotes autophagy. Required for starvation-induced perinuclear clustering of lysosomes by promoting association of RILP with its effector RAB34. Regulates glycolysis by binding to lactate dehydrogenase LDHA, acting as an uncompetitive inhibitor. This Homo sapiens (Human) protein is Folliculin.